The sequence spans 639 residues: Protein phosphatase 2C 35 (639 aa).

The PPM-type phosphatase domain occupies 227–630 (GGDPCGLQWA…DDVSVIVISL (404 aa)). Mn(2+) is bound by residues Asp-262 and Gly-263. Positions 295–341 (QNVQHDQRPDQPGSAPSTTASDNQDQWGRRRRTRRSRPPRGADDDQR) are disordered. Residues 308-320 (SAPSTTASDNQDQ) show a composition bias toward polar residues. Positions 323-332 (RRRRTRRSRP) are enriched in basic residues. Positions 558 and 621 each coordinate Mn(2+).

It belongs to the PP2C family. Interacts with XA21 (via juxtamembrane and kinase domains). Requires Mg(2+) as cofactor. It depends on Mn(2+) as a cofactor.

The protein localises to the cell membrane. The catalysed reaction is O-phospho-L-seryl-[protein] + H2O = L-seryl-[protein] + phosphate. It carries out the reaction O-phospho-L-threonyl-[protein] + H2O = L-threonyl-[protein] + phosphate. In terms of biological role, protein phosphatase that acts on XA21 pathogen recognition receptor. Negatively regulates cell death and XA21-mediated innate immunity. The sequence is that of Protein phosphatase 2C 35 (XB15) from Oryza sativa subsp. japonica (Rice).